The following is a 598-amino-acid chain: Proline--tRNA ligase (598 aa).

The protein belongs to the class-II aminoacyl-tRNA synthetase family. ProS type 1 subfamily. Homodimer.

Its subcellular location is the cytoplasm. The enzyme catalyses tRNA(Pro) + L-proline + ATP = L-prolyl-tRNA(Pro) + AMP + diphosphate. Its function is as follows. Catalyzes the attachment of proline to tRNA(Pro) in a two-step reaction: proline is first activated by ATP to form Pro-AMP and then transferred to the acceptor end of tRNA(Pro). As ProRS can inadvertently accommodate and process non-cognate amino acids such as alanine and cysteine, to avoid such errors it has two additional distinct editing activities against alanine. One activity is designated as 'pretransfer' editing and involves the tRNA(Pro)-independent hydrolysis of activated Ala-AMP. The other activity is designated 'posttransfer' editing and involves deacylation of mischarged Ala-tRNA(Pro). The misacylated Cys-tRNA(Pro) is not edited by ProRS. The polypeptide is Proline--tRNA ligase (Rippkaea orientalis (strain PCC 8801 / RF-1) (Cyanothece sp. (strain PCC 8801))).